Consider the following 734-residue polypeptide: MALRFPSFSQGLAQDPTTRRIWFGIATAHDFESHDDITEERLYQNIFASHFGQLAIIFLWTSGNLFHVAWQGNFETWVQDPLHVRPIAHAIWDPHFGQPAVEAFTRGGALGPVNIAYSGVYQWWYTIGLRTNGDLYTGAIFLLILSTISLIAGWLHLQPKWKPSVSWFKNAESRLNHHLSGLFGVSSLAWTGHLVHVAIPGSRGEYVRWNNLLGILPHPEGLGPFFTGQWNLYAQNPDSNNHIFGTPQGAGTAILTLLGGFHPQTQSLWLTDIAHHHLAIAFIFLVAGHMYRTNFGIGHSIKDLLEVHTPPGGRLGRGHKGLYDTINNSIHFQLGLALASLGVITSLVAQHMYSLPAYAFIAQDFTTQAALYTHHQYIAGFIMTGAFAHGAIFFIRDYNPEQNKDNVLARMLDHKEAIISHLSWASLFLGFHTLGLYVHNDVMLAFGTPEKQILIEPIFAQWIQSAHGKTSYGFDILLSSTNSPAFNAGRSIWLPGWLNAVNENSNSLFLTIGPGDFLVHHAIALGLHTTTLILVKGALDARGSKLMPDKKDFGYSFPCDGPGRGGTCDISAWDAFYLAVFWMLNTIGWVTFYWHWKHITLWQGNISQFNESSTYLMGWLRDYLWLNSSQLINGYNPFGMNSLSVWAWMFLFGHLVWATGFMFLISWRGYWQELIETLAWAHERTPLANLIRWRDKPVALSIVQARLVGLAHFSVGYIFTYAAFLIASTSGKFG.

Helical transmembrane passes span 46–69, 135–158, 175–199, 273–291, 330–353, 369–395, 417–439, and 517–535; these read IFAS…FHVA, LYTG…LHLQ, LNHH…HVAI, IAHH…GHMY, IHFQ…QHMY, AALY…IFFI, AIIS…LYVH, and FLVH…LILV. Residues C559 and C568 each coordinate [4Fe-4S] cluster. A run of 2 helical transmembrane segments spans residues 575 to 596 and 643 to 665; these read AFYL…YWHW and LSVW…MFLI. Residues H654, M662, and Y670 each contribute to the chlorophyll a site. A phylloquinone-binding site is contributed by W671. The chain crosses the membrane as a helical span at residues 707-727; that stretch reads LVGLAHFSVGYIFTYAAFLIA.

This sequence belongs to the PsaA/PsaB family. As to quaternary structure, the PsaA/B heterodimer binds the P700 chlorophyll special pair and subsequent electron acceptors. PSI consists of a core antenna complex that captures photons, and an electron transfer chain that converts photonic excitation into a charge separation. The eukaryotic PSI reaction center is composed of at least 11 subunits. P700 is a chlorophyll a/chlorophyll a' dimer, A0 is one or more chlorophyll a, A1 is one or both phylloquinones and FX is a shared 4Fe-4S iron-sulfur center. serves as cofactor.

The protein resides in the plastid. The protein localises to the chloroplast thylakoid membrane. The enzyme catalyses reduced [plastocyanin] + hnu + oxidized [2Fe-2S]-[ferredoxin] = oxidized [plastocyanin] + reduced [2Fe-2S]-[ferredoxin]. Functionally, psaA and PsaB bind P700, the primary electron donor of photosystem I (PSI), as well as the electron acceptors A0, A1 and FX. PSI is a plastocyanin-ferredoxin oxidoreductase, converting photonic excitation into a charge separation, which transfers an electron from the donor P700 chlorophyll pair to the spectroscopically characterized acceptors A0, A1, FX, FA and FB in turn. Oxidized P700 is reduced on the lumenal side of the thylakoid membrane by plastocyanin. In Phaseolus vulgaris (Kidney bean), this protein is Photosystem I P700 chlorophyll a apoprotein A2.